Consider the following 266-residue polypeptide: RNA polymerase II subunit A C-terminal domain phosphatase ssu-72 (266 aa).

The interval 1 to 31 (MSAVDTPTGAASSSKPDQNEQNGQNGGREDS) is disordered. Residues 9–23 (GAASSSKPDQNEQNG) show a composition bias toward polar residues.

It belongs to the SSU72 phosphatase family. As to quaternary structure, component of the cleavage and polyadenylation factor (CPF) complex.

The protein localises to the nucleus. It catalyses the reaction O-phospho-L-seryl-[protein] + H2O = L-seryl-[protein] + phosphate. It carries out the reaction O-phospho-L-threonyl-[protein] + H2O = L-threonyl-[protein] + phosphate. Its function is as follows. Processively dephosphorylates Ser-5 of the heptad repeats YSPTSPS in the C-terminal domain of the largest RNA polymerase II subunit (rpb-1). Functionally, component of the cleavage and polyadenylation factor (CPF) complex, which plays a key role in polyadenylation-dependent pre-mRNA 3'-end formation and cooperates with cleavage factors including the CFIA complex and NAB4/CFIB. Ssu-72 is required for 3'-end formation of snoRNAs. The protein is RNA polymerase II subunit A C-terminal domain phosphatase ssu-72 (ssu-72) of Neurospora crassa (strain ATCC 24698 / 74-OR23-1A / CBS 708.71 / DSM 1257 / FGSC 987).